Consider the following 400-residue polypeptide: Na(+)/H(+) antiporter NhaA (400 aa).

12 helical membrane passes run 26-46 (AGGI…NSPL), 71-91 (LIHW…GMEV), 107-127 (IFPA…YWFI), 137-157 (GWAI…ALLS), 166-186 (IFLL…IALF), 189-209 (HGLS…LILL), 212-232 (FKVS…ASVL), 233-253 (KSGV…PLKG), 273-293 (FVIL…GIDV), 299-319 (PLLL…IFGF), 340-360 (IFAV…LASL), and 373-393 (LSRL…YLFL).

This sequence belongs to the NhaA Na(+)/H(+) (TC 2.A.33) antiporter family.

The protein localises to the cell inner membrane. The catalysed reaction is Na(+)(in) + 2 H(+)(out) = Na(+)(out) + 2 H(+)(in). In terms of biological role, na(+)/H(+) antiporter that extrudes sodium in exchange for external protons. The chain is Na(+)/H(+) antiporter NhaA from Haemophilus influenzae (strain PittEE).